The sequence spans 383 residues: Queuine tRNA-ribosyltransferase (383 aa).

Residue D92 is the Proton acceptor of the active site. Substrate contacts are provided by residues 92–96 (DSGGF), D146, Q190, and G217. Residues 248–254 (GVGKPED) are RNA binding. D267 serves as the catalytic Nucleophile. The tract at residues 272-276 (TRNAR) is RNA binding; important for wobble base 34 recognition. Residues C310, C312, C315, and H341 each contribute to the Zn(2+) site.

This sequence belongs to the queuine tRNA-ribosyltransferase family. Homodimer. Within each dimer, one monomer is responsible for RNA recognition and catalysis, while the other monomer binds to the replacement base PreQ1. It depends on Zn(2+) as a cofactor.

The enzyme catalyses 7-aminomethyl-7-carbaguanine + guanosine(34) in tRNA = 7-aminomethyl-7-carbaguanosine(34) in tRNA + guanine. The protein operates within tRNA modification; tRNA-queuosine biosynthesis. In terms of biological role, catalyzes the base-exchange of a guanine (G) residue with the queuine precursor 7-aminomethyl-7-deazaguanine (PreQ1) at position 34 (anticodon wobble position) in tRNAs with GU(N) anticodons (tRNA-Asp, -Asn, -His and -Tyr). Catalysis occurs through a double-displacement mechanism. The nucleophile active site attacks the C1' of nucleotide 34 to detach the guanine base from the RNA, forming a covalent enzyme-RNA intermediate. The proton acceptor active site deprotonates the incoming PreQ1, allowing a nucleophilic attack on the C1' of the ribose to form the product. After dissociation, two additional enzymatic reactions on the tRNA convert PreQ1 to queuine (Q), resulting in the hypermodified nucleoside queuosine (7-(((4,5-cis-dihydroxy-2-cyclopenten-1-yl)amino)methyl)-7-deazaguanosine). In Psychrobacter sp. (strain PRwf-1), this protein is Queuine tRNA-ribosyltransferase.